We begin with the raw amino-acid sequence, 90 residues long: Putative UPF0401 protein YpjI (90 aa).

This sequence belongs to the UPF0401 family.

In Escherichia coli (strain K12), this protein is Putative UPF0401 protein YpjI (ypjI).